Consider the following 534-residue polypeptide: Beta-1,2-xylosyltransferase (534 aa).

Topologically, residues 1–11 (MSKRNPKILKI) are cytoplasmic. Residues 12–34 (FLYMLLLNSLFLIIYFVFHSSSF) traverse the membrane as a helical; Signal-anchor for type II membrane protein segment. Residues 35-534 (SPEQSQPPHI…LTEIMKSLGC (500 aa)) lie on the Lumenal side of the membrane. 3 N-linked (GlcNAc...) asparagine glycosylation sites follow: Asn51, Asn301, and Asn479.

Glycosylation at least at one of the two sites Asn-51 and Asn-301 is necessary for enzyme stability and activity.

Its subcellular location is the golgi apparatus membrane. It carries out the reaction N(4)-{beta-D-GlcNAc-(1-&gt;2)-alpha-D-Man-(1-&gt;3)-[beta-D-GlcNAc-(1-&gt;2)-alpha-D-Man-(1-&gt;6)]-beta-D-Man-(1-&gt;4)-beta-D-GlcNAc-(1-&gt;4)-beta-D-GlcNAc}-L-asparaginyl-[protein] + UDP-alpha-D-xylose = N(4)-{beta-D-GlcNAc-(1-&gt;2)-alpha-D-Man-(1-&gt;3)-[beta-D-GlcNAc-(1-&gt;2)-alpha-D-Man-(1-&gt;6)]-[beta-D-Xyl-(1-&gt;2)]-beta-D-Man-(1-&gt;4)-beta-D-GlcNAc-(1-&gt;4)-beta-D-GlcNAc}-L-asparaginyl-[protein] + UDP + H(+). The protein operates within protein modification; protein glycosylation. In terms of biological role, glycosyltransferase involved in the xylosylation of N-glycans. Possesses beta-1,2-xylosyltransferase activity, transferring xylose from UDP-xylose to the core beta-linked mannose of N-glycans. Involved in the biosynthesis of glycoprotein bound N-glycans. Does not require metal ions for its activity. In Arabidopsis thaliana (Mouse-ear cress), this protein is Beta-1,2-xylosyltransferase.